An 899-amino-acid polypeptide reads, in one-letter code: Core protein VP3 (899 aa).

Residues 1 to 21 are disordered; the sequence is MADPPDANVPKTSPYLKGDEL.

This sequence belongs to the orbivirus VP3 family.

It is found in the virion. Its function is as follows. The VP3 protein is one of the five proteins (with VP1, VP4, VP6 and VP7) which form the inner capsid of the virus. The polypeptide is Core protein VP3 (Segment-3) (Epizootic hemorrhagic disease virus 1 (EHDV-1)).